A 415-amino-acid chain; its full sequence is Phosphoglycerate kinase (415 aa).

Substrate-binding positions include 27–29 (DVN), Arg44, 67–70 (HQGR), Arg124, and Arg164. Residues Glu336 and 362–365 (GGHM) each bind ATP.

This sequence belongs to the phosphoglycerate kinase family. In terms of assembly, monomer.

It localises to the cytoplasm. The enzyme catalyses (2R)-3-phosphoglycerate + ATP = (2R)-3-phospho-glyceroyl phosphate + ADP. The protein operates within carbohydrate degradation; glycolysis; pyruvate from D-glyceraldehyde 3-phosphate: step 2/5. In Sulfolobus acidocaldarius (strain ATCC 33909 / DSM 639 / JCM 8929 / NBRC 15157 / NCIMB 11770), this protein is Phosphoglycerate kinase.